Reading from the N-terminus, the 468-residue chain is Zinc finger protein 672 (468 aa).

4 consecutive C2H2-type zinc fingers follow at residues 15–37 (YSCSVCGKSFQYSAVLLRHERAH), 43–65 (FCCLECGERCARAADLRAHRWTH), 71–93 (YICSECGQSFSHSGLLDLHLGTH), and 100–123 (RPCRLCGRRFPHVPALLLHRARQH). A C2H2-type 5; degenerate zinc finger spans residues 129–151 (HRCPLCARSFRQSALPFHLARAH). C2H2-type zinc fingers lie at residues 167-189 (YHCTQCPRAFHSSAGLRNHSRIH), 202-224 (HLCGICGKSFSKSSTLTRHLQRH), 230-252 (FKCPECGKGFLESATLVRHQRTH), 258-280 (YACSDCGRCFSESSTLLRHQRSH), 286-308 (HVCATCGKGFGQRYDLVVHQRSH), 314-336 (FPCPQCGRGFTDRSDLTKHLRTH), 342-364 (YHCELCGKRFTCISNLNVHLRNH), 370-392 (HKCPECGKSFSVASKLALHRKTH), and 398-420 (AECTECGKFFSHGRSLSQHQRSH).

The protein belongs to the krueppel C2H2-type zinc-finger protein family.

The protein localises to the nucleus. Its function is as follows. May be involved in transcriptional regulation. The protein is Zinc finger protein 672 (Znf672) of Mus musculus (Mouse).